The primary structure comprises 135 residues: ATP synthase epsilon chain (135 aa).

It belongs to the ATPase epsilon chain family. In terms of assembly, F-type ATPases have 2 components, CF(1) - the catalytic core - and CF(0) - the membrane proton channel. CF(1) has five subunits: alpha(3), beta(3), gamma(1), delta(1), epsilon(1). CF(0) has three main subunits: a, b and c.

The protein localises to the cell inner membrane. Its function is as follows. Produces ATP from ADP in the presence of a proton gradient across the membrane. This chain is ATP synthase epsilon chain, found in Rhizobium etli (strain CIAT 652).